The chain runs to 947 residues: Zinc finger CCCH domain-containing protein 18 (947 aa).

Methionine 1 bears the N-acetylmethionine mark. Disordered stretches follow at residues 1–218 (MDVA…PRPT), 275–295 (GGPVVDEILPPPPPEPPTESA), and 387–921 (YTEA…TLSR). Residues serine 6, serine 32, serine 44, serine 57, serine 63, serine 70, serine 74, serine 79, and serine 91 each carry the phosphoserine modification. A compositionally biased stretch (basic and acidic residues) spans 73–85 (KSQDQDSEAHELS). Over residues 94–104 (EEGDDAEEDGT) the composition is skewed to acidic residues. A Phosphothreonine modification is found at threonine 104. 2 positions are modified to phosphoserine: serine 105 and serine 113. The span at 105 to 119 (SDLRDEASSVTRELD) shows a compositional bias: basic and acidic residues. Acidic residues-rich tracts occupy residues 120–131 (EHELDYDEEVPE) and 138–153 (QEEEAEKAGAEEEEEK). Residues 160 to 185 (EEGKPDVQSVGEKEPTEAAKEKKKED) show a composition bias toward basic and acidic residues. Serine 168 carries the phosphoserine modification. Acidic residues predominate over residues 186–202 (DDGEIDDGEIDDDDLEE). Over residues 203-212 (GEVKDPSDRK) the composition is skewed to basic and acidic residues. A C3H1-type zinc finger spans residues 214 to 240 (RPRPTCRFFMKGNCTWGMNCRFIHPGV). Over residues 391-479 (EPYHNYRDRE…DRDKDKEKPK (89 aa)) the composition is skewed to basic and acidic residues. The residue at position 482 (serine 482) is a Phosphoserine. Lysine 505 is covalently cross-linked (Glycyl lysine isopeptide (Lys-Gly) (interchain with G-Cter in SUMO2)). A compositionally biased stretch (basic and acidic residues) spans 505 to 515 (KRADEWKDPWR). Phosphoserine occurs at positions 527, 529, and 531. Over residues 540–601 (SASSASASNS…SRSRSFSSSP (62 aa)) the composition is skewed to low complexity. The span at 602-611 (SPSPTPSPHR) shows a compositional bias: pro residues. Residues lysine 617 and lysine 656 each participate in a glycyl lysine isopeptide (Lys-Gly) (interchain with G-Cter in SUMO2) cross-link. Over residues 656–665 (KPGDLREARR) the composition is skewed to basic and acidic residues. Composition is skewed to low complexity over residues 687–720 (GSSYSGSSSRSRSLSVSSVSSVSSATSSSSSVHS) and 731–745 (ASPVSSASSRSPTPA). Basic and acidic residues predominate over residues 755 to 769 (KKEDGVREEKRKRDP). Positions 773-804 (PPKSSKAPAGGKASQQAAAPQQAAPGQPQQGS) are enriched in low complexity. N6-acetyllysine is present on lysine 809. A Glycyl lysine isopeptide (Lys-Gly) (interchain with G-Cter in SUMO2) cross-link involves residue lysine 812. Residues 819-836 (AAEKGSRKRYEPSDKDRQ) show a composition bias toward basic and acidic residues. Phosphoserine occurs at positions 837, 846, 862, 887, and 890. The span at 887–918 (SPQSKSSSKVTSVPGKATDTATAGTKSGKAST) shows a compositional bias: low complexity. Residue lysine 902 forms a Glycyl lysine isopeptide (Lys-Gly) (interchain with G-Cter in SUMO2) linkage. The stretch at 915 to 944 (KASTLSRREELLKQLKAVEDAIARKRAKIP) forms a coiled coil.

In terms of assembly, interacts with ZFC3H1 in a RNase-insensitive manner.

The protein localises to the nucleus. The protein is Zinc finger CCCH domain-containing protein 18 (Zc3h18) of Rattus norvegicus (Rat).